Here is a 602-residue protein sequence, read N- to C-terminus: Trichothecene efflux pump TRI12 (602 aa).

4 helical membrane-spanning segments follow: residues 49 to 69, 77 to 97, 107 to 127, and 134 to 154; these read LTLL…SFII, NVSL…LLMG, GFIL…LYSF, and IGAQ…ILFI. Residue Asn160 is glycosylated (N-linked (GlcNAc...) asparagine). The next 11 helical transmembrane spans lie at 164 to 184, 196 to 216, 240 to 260, 271 to 291, 297 to 317, 355 to 375, 380 to 400, 408 to 428, 450 to 470, 484 to 504, and 532 to 552; these read FLGN…GPYI, WIFY…FIFY, WIGA…VSWG, ILGL…YECY, PIIP…MLLI, STAG…FHIF, WQLI…ASVN, IAFS…TMLL, AICG…KFPG, WGFP…LTGQ, and AAAY…AIIA. Asn590 carries an N-linked (GlcNAc...) asparagine glycan.

This sequence belongs to the major facilitator superfamily.

It localises to the cell membrane. In terms of biological role, efflux pump that provides the dual role of trichothecene export and self-protection by allowing the fungus to evade the harmful effect of its own trichothecene production. This Trichoderma arundinaceum protein is Trichothecene efflux pump TRI12.